A 286-amino-acid polypeptide reads, in one-letter code: MGAAESEVETAAREVLAKVADILEPVGFQEEAELPAQILAEFVMDSRKKDKLLCSQLQVVDFLQNFLVQEGTAQDQNPLASEDTSRQKALEAKEQWKELKATYQEHVEVITNSLTEALPKVEEAQIKQAQLQEALKQLQAKKQMAMEKLRIAQKQWQLEQEKHLQNLAEASSEVRERQTGAQQELQRLYQELGTLKQQAGQEKDKLQRHQTFLQLLYTLQGKQLFNEAEAEIPQELDLPKDKLQQVTQPQEQNTQDTMGREADNPQPVGDAGLPWLPGRQQHKEES.

A coiled-coil region spans residues 85-211; the sequence is SRQKALEAKE…EKDKLQRHQT (127 aa). The disordered stretch occupies residues 230–286; sequence AEIPQELDLPKDKLQQVTQPQEQNTQDTMGREADNPQPVGDAGLPWLPGRQQHKEES. A compositionally biased stretch (low complexity) spans 244 to 255; it reads QQVTQPQEQNTQ.

Component of the KNL1 complex composed of KNL1 and ZWINT. Part of the ten-subunit outer kinetochore KMN network that includes the KNL1, MIS12 and NDC80 complexes; a bioriented kinetochore contains approximately 150 copies of the network. Interacts with the MIS12 complex subunits MIS12 DSN1, and PMF1. Interacts with the NDC80 complex subunit NDC80 during mitosis. Interacts with ZW10. Interacts with CETN3.

The protein localises to the nucleus. Its subcellular location is the chromosome. It is found in the centromere. The protein resides in the kinetochore. Its function is as follows. Acts as a component of the outer kinetochore KNL1 complex that serves as a docking point for spindle assembly checkpoint components and mediates microtubule-kinetochore interactions. Kinetochores, consisting of a centromere-associated inner segment and a microtubule-contacting outer segment, play a crucial role in chromosome segregation by mediating the physical connection between centromeric DNA and spindle microtubules. The outer kinetochore is made up of the ten-subunit KMN network, comprising the MIS12, NDC80 and KNL1 complexes, and auxiliary microtubule-associated components; together they connect the outer kinetochore with the inner kinetochore, bind microtubules, and mediate interactions with mitotic checkpoint proteins that delay anaphase until chromosomes are bioriented on the spindle. Targets the RZZ complex to the kinetochore at prometaphase. Recruits MAD2L1 to the kinetochore, but is not required for BUB1B localization. In addition to orienting mitotic chromosomes, it is also essential for alignment of homologous chromosomes during meiotic metaphase I. In meiosis I, required to activate the spindle assembly checkpoint at unattached kinetochores to correct erroneous kinetochore-microtubule attachments. This is Outer kinetochore KNL1 complex subunit ZWINT (ZWINT) from Bos taurus (Bovine).